The chain runs to 273 residues: Flagellin FljK (273 aa).

Belongs to the bacterial flagellin family. In terms of assembly, in C.crescentus, the flagellar filament is composed of multiple flagellins of 29 kDa; 27 kDa and 25 kDa.

The protein resides in the secreted. Its subcellular location is the bacterial flagellum. Its function is as follows. Flagellin is the subunit protein which polymerizes to form the filaments of bacterial flagella. The sequence is that of Flagellin FljK (fljK) from Caulobacter vibrioides (strain ATCC 19089 / CIP 103742 / CB 15) (Caulobacter crescentus).